We begin with the raw amino-acid sequence, 124 residues long: Membrane magnesium transporter 2 (124 aa).

Position 1 (Met-1) is a topological domain, cytoplasmic. Residues 2-22 form a helical membrane-spanning segment; sequence VAWLWKVLVGVGLSALAHAAF. Residues 23–44 are Lumenal-facing; that stretch reads SAAQHRSHTRLAEMKYEPLPTD. A helical membrane pass occupies residues 45–65; that stretch reads IVLQTLLAFALTCYGVVHTAG. Over 66-124 the chain is Cytoplasmic; the sequence is DFRDRDATSELKNVTFDTLRNRPSFYVFQHSGSSLLQPSDTTRSSNLNVPSSDDIRLKF.

This sequence belongs to the membrane magnesium transporter (TC 1.A.67) family.

Its subcellular location is the golgi apparatus membrane. The protein resides in the early endosome membrane. Functionally, mediates Mg(2+) transport. This is Membrane magnesium transporter 2 from Rattus norvegicus (Rat).